A 223-amino-acid chain; its full sequence is Endonuclease NucS (223 aa).

Belongs to the NucS endonuclease family.

The protein localises to the cytoplasm. Its function is as follows. Cleaves both 3' and 5' ssDNA extremities of branched DNA structures. This chain is Endonuclease NucS, found in Mycolicibacterium vanbaalenii (strain DSM 7251 / JCM 13017 / BCRC 16820 / KCTC 9966 / NRRL B-24157 / PYR-1) (Mycobacterium vanbaalenii).